A 221-amino-acid chain; its full sequence is Translation initiation factor 6 (221 aa).

The protein belongs to the eIF-6 family.

Functionally, binds to the 50S ribosomal subunit and prevents its association with the 30S ribosomal subunit to form the 70S initiation complex. This is Translation initiation factor 6 from Nitrosopumilus maritimus (strain SCM1).